Reading from the N-terminus, the 242-residue chain is Phosphoribosylaminoimidazole-succinocarboxamide synthase (242 aa).

This sequence belongs to the SAICAR synthetase family.

It catalyses the reaction 5-amino-1-(5-phospho-D-ribosyl)imidazole-4-carboxylate + L-aspartate + ATP = (2S)-2-[5-amino-1-(5-phospho-beta-D-ribosyl)imidazole-4-carboxamido]succinate + ADP + phosphate + 2 H(+). Its pathway is purine metabolism; IMP biosynthesis via de novo pathway; 5-amino-1-(5-phospho-D-ribosyl)imidazole-4-carboxamide from 5-amino-1-(5-phospho-D-ribosyl)imidazole-4-carboxylate: step 1/2. The polypeptide is Phosphoribosylaminoimidazole-succinocarboxamide synthase (Pediococcus pentosaceus (strain ATCC 25745 / CCUG 21536 / LMG 10740 / 183-1w)).